Here is an 840-residue protein sequence, read N- to C-terminus: Serotype-specific mannosyltransferase WbdA (840 aa).

Positions 2 to 399 (HILIDVQGYQ…WANTAHLAIE (398 aa)) are alpha-(1-&gt;2)-mannosyltransferase. An alpha-(1-&gt;3)-mannosyltransferase region spans residues 456–829 (KLLVDISVLA…WKQSAEFLLK (374 aa)).

Belongs to the glycosyltransferase group 1 family. Glycosyltransferase 4 subfamily. In terms of assembly, monomer. Interacts with the C-terminal region of WbdD. Interacts with WbdD via a surface-exposed alpha-helix in the C-terminal mannosyltransferase domain. However, the C-terminal domain is unable to interact with WbdD in the absence of its N-terminal partner.

Its subcellular location is the cell inner membrane. It carries out the reaction [alpha-D-Man-(1-&gt;3)-alpha-D-Man-(1-&gt;3)-alpha-D-Man-(1-&gt;2)-alpha-D-Man-(1-&gt;2)](n)-alpha-D-Man-(1-&gt;3)-alpha-D-Man-(1-&gt;3)-alpha-D-Man-(1-&gt;3)-alpha-D-GlcNAc-di-trans,octa-cis-undecaprenyl diphosphate + 2 GDP-alpha-D-mannose = alpha-D-Man-(1-&gt;2)-alpha-D-Man-(1-&gt;2)-[alpha-D-Man-(1-&gt;3)-alpha-D-Man-(1-&gt;3)-alpha-D-Man-(1-&gt;2)-alpha-D-Man-(1-&gt;2)](n)-alpha-D-Man-(1-&gt;3)-alpha-D-Man-(1-&gt;3)-alpha-D-Man-(1-&gt;3)-alpha-D-GlcNAc-di-trans,octa-cis-undecaprenyl diphosphate + 2 GDP + 2 H(+). The enzyme catalyses alpha-D-Man-(1-&gt;2)-alpha-D-Man-(1-&gt;2)-[alpha-D-Man-(1-&gt;3)-alpha-D-Man-(1-&gt;3)-alpha-D-Man-(1-&gt;2)-alpha-D-Man-(1-&gt;2)](n)-alpha-D-Man-(1-&gt;3)-alpha-D-Man-(1-&gt;3)-alpha-D-Man-(1-&gt;3)-alpha-D-GlcNAc-di-trans,octa-cis-undecaprenyl diphosphate + 2 GDP-alpha-D-mannose = [alpha-D-Man-(1-&gt;3)-alpha-D-Man-(1-&gt;3)-alpha-D-Man-(1-&gt;2)-alpha-D-Man-(1-&gt;2)](n+1)-alpha-D-Man-(1-&gt;3)-alpha-D-Man-(1-&gt;3)-alpha-D-Man-(1-&gt;3)-alpha-D-GlcNAc-di-trans,octa-cis-undecaprenyl diphosphate + 2 GDP + 2 H(+). The protein operates within bacterial outer membrane biogenesis; LPS O-antigen biosynthesis. With respect to regulation, the alpha-(1-&gt;2)-mannosyltransferase activity of the N-terminal domain is regulated by the activity of the C-terminal alpha-(1-&gt;3)-mannosyltransferase. The relative concentration of WbdA and WbdD is critical in determining the O polysaccharide (OPS) modal chain length. OPS chain length increases with increasing concentration of WbdA, but the maximum length does not increase beyond the wild-type modal length, despite substantial increases in WbdA concentration. Functionally, mannosyltransferase involved in the biosynthesis of the repeat unit of the lipopolysaccharide (LPS) O-antigen region. Catalyzes the polymerization of a tetrasaccharide repeat unit containing two alpha-(1-&gt;3)- and two alpha-(1-&gt;2)-linked mannopyranose residues. Extension is terminated by the action of the chain terminator bifunctional methyltransferase/kinase WbdD. This chain is Serotype-specific mannosyltransferase WbdA, found in Escherichia coli.